Consider the following 421-residue polypeptide: Testin (421 aa).

Positions 92–199 constitute a PET domain; the sequence is MILTNPVAAK…GDVKLPREMN (108 aa). The disordered stretch occupies residues 133-164; the sequence is EKQPVAGSEGAQYRKKQLAKQLPAHDQDPSKC. Residues 155–164 show a composition bias toward basic and acidic residues; it reads PAHDQDPSKC. LIM zinc-binding domains follow at residues 234–297, 299–359, and 362–421; these read YSCY…CDSE, PRCA…NHAV, and QGCH…KMMS.

It belongs to the prickle / espinas / testin family. In terms of assembly, interacts via LIM domain 1 with ZYX. Interacts (via LIM domain 3) with ENAH and VASP. Interacts with ALKBH4, talin, actin, alpha-actinin, GRIP1 and PXN. Interacts (via LIM domain 2) with ACTL7A (via N-terminus). Heterodimer with ACTL7A; the heterodimer interacts with ENAH to form a heterotrimer.

Its subcellular location is the cytoplasm. The protein resides in the cell junction. It localises to the focal adhesion. Its function is as follows. Scaffold protein that may play a role in cell adhesion, cell spreading and in the reorganization of the actin cytoskeleton. Plays a role in the regulation of cell proliferation. May act as a tumor suppressor. The protein is Testin (TES) of Sus scrofa (Pig).